The primary structure comprises 391 residues: Phosphoglycerate kinase (391 aa).

Substrate-binding positions include 21–23 (DLN), Arg36, 59–62 (HLGR), Arg113, and Arg146. ATP contacts are provided by residues Lys197, Glu319, and 345 to 348 (GGDT).

The protein belongs to the phosphoglycerate kinase family. As to quaternary structure, monomer.

It is found in the cytoplasm. It catalyses the reaction (2R)-3-phosphoglycerate + ATP = (2R)-3-phospho-glyceroyl phosphate + ADP. The protein operates within carbohydrate degradation; glycolysis; pyruvate from D-glyceraldehyde 3-phosphate: step 2/5. This Xylella fastidiosa (strain Temecula1 / ATCC 700964) protein is Phosphoglycerate kinase.